The chain runs to 360 residues: Phospho-N-acetylmuramoyl-pentapeptide-transferase (360 aa).

10 helical membrane-spanning segments follow: residues 21–41 (YITF…LWIG), 73–93 (TMGG…WADL), 98–118 (IWFV…DDYW), 132–152 (WKYF…YAVG), 168–188 (VMPQ…VGTS), 199–219 (GLAI…AWAT), 236–256 (AGEL…FLWY), 263–283 (VFMG…IAVL), 288–308 (LLLV…ILQV), and 338–358 (VIVR…VTLK).

This sequence belongs to the glycosyltransferase 4 family. MraY subfamily. Mg(2+) serves as cofactor.

The protein localises to the cell inner membrane. It catalyses the reaction UDP-N-acetyl-alpha-D-muramoyl-L-alanyl-gamma-D-glutamyl-meso-2,6-diaminopimeloyl-D-alanyl-D-alanine + di-trans,octa-cis-undecaprenyl phosphate = di-trans,octa-cis-undecaprenyl diphospho-N-acetyl-alpha-D-muramoyl-L-alanyl-D-glutamyl-meso-2,6-diaminopimeloyl-D-alanyl-D-alanine + UMP. It functions in the pathway cell wall biogenesis; peptidoglycan biosynthesis. Its function is as follows. Catalyzes the initial step of the lipid cycle reactions in the biosynthesis of the cell wall peptidoglycan: transfers peptidoglycan precursor phospho-MurNAc-pentapeptide from UDP-MurNAc-pentapeptide onto the lipid carrier undecaprenyl phosphate, yielding undecaprenyl-pyrophosphoryl-MurNAc-pentapeptide, known as lipid I. In Actinobacillus pleuropneumoniae serotype 5b (strain L20), this protein is Phospho-N-acetylmuramoyl-pentapeptide-transferase.